A 153-amino-acid chain; its full sequence is Endoribonuclease YbeY (153 aa).

Zn(2+) contacts are provided by histidine 115, histidine 119, and histidine 125.

The protein belongs to the endoribonuclease YbeY family. The cofactor is Zn(2+).

Its subcellular location is the cytoplasm. Its function is as follows. Single strand-specific metallo-endoribonuclease involved in late-stage 70S ribosome quality control and in maturation of the 3' terminus of the 16S rRNA. The polypeptide is Endoribonuclease YbeY (Blochmanniella floridana).